The primary structure comprises 284 residues: NAD kinase (284 aa).

The active-site Proton acceptor is Asp60. NAD(+) contacts are provided by residues 60 to 61, 134 to 135, Arg145, Lys162, Asp164, 175 to 180, and Gln234; these read DG, ND, and TAYSFS.

Belongs to the NAD kinase family. It depends on a divalent metal cation as a cofactor.

Its subcellular location is the cytoplasm. It carries out the reaction NAD(+) + ATP = ADP + NADP(+) + H(+). Its function is as follows. Involved in the regulation of the intracellular balance of NAD and NADP, and is a key enzyme in the biosynthesis of NADP. Catalyzes specifically the phosphorylation on 2'-hydroxyl of the adenosine moiety of NAD to yield NADP. The protein is NAD kinase of Clostridium beijerinckii (strain ATCC 51743 / NCIMB 8052) (Clostridium acetobutylicum).